A 1481-amino-acid chain; its full sequence is DNA excision repair protein ERCC-6 (1481 aa).

The tract at residues 1-506 (MFHEEVPNST…GFLFKKLFKY (506 aa)) is N-terminal domain; essential for its chromatin remodeling activity. Serine 158 carries the phosphoserine; by CDK2 modification. Lysine 170 carries the post-translational modification N6-methylated lysine; by EHMT2. Residue lysine 256 forms a Glycyl lysine isopeptide (Lys-Gly) (interchain with G-Cter in SUMO2) linkage. The residue at position 298 (lysine 298) is an N6-methylated lysine; by EHMT2. A disordered region spans residues 309–452 (AIETKADQRS…RKVARRQDDG (144 aa)). Basic residues predominate over residues 327 to 337 (RLKKHSRKLQR). Basic and acidic residues predominate over residues 353–363 (KPLEPEVRPEA). Composition is skewed to acidic residues over residues 378-390 (DGEEEEEQEEEEG) and 420-435 (EIDDDFFPSSEEEDEA). Phosphoserine occurs at positions 428 and 429. The residue at position 444 (lysine 444) is an N6-methylated lysine; by EHMT2. Serine 482 and serine 485 each carry phosphoserine. The region spanning 515 to 691 (WELHCQQAGG…WSLFDFIFPG (177 aa)) is the Helicase ATP-binding domain. 528–535 (DEMGLGKT) contacts ATP. A DEAH box motif is present at residues 642-645 (DEGH). In terms of domain architecture, Helicase C-terminal spans 839–998 (VVESLLKIWH…RRFFKSNDLY (160 aa)). Disordered stretches follow at residues 1040 to 1096 (LGTD…NRAS), 1114 to 1238 (SVMS…DRSS), and 1307 to 1372 (GHRG…GAPS). Lysine 1047 carries the post-translational modification N6-methylated lysine; by EHMT2. Residues 1138 to 1147 (ASTSEKQGSS) show a composition bias toward polar residues. Positions 1192–1201 (QPKQKAKNSK) are enriched in basic residues. The span at 1202–1212 (HCRDAKFEGTR) shows a compositional bias: basic and acidic residues. Residues 1330–1345 (LPVQHPSSLTEKTQNN) show a composition bias toward polar residues. A compositionally biased stretch (basic and acidic residues) spans 1346–1364 (MKKEGKAHTPEHFSGKEDG). Residues 1373-1385 (SSSLLARMRARNH) carry the CSA-interacting motif (CIM) motif. A ubiquitin-binding domain (UBD) region spans residues 1387-1416 (ILPERLESDSEHLAEAAAVPPCGTEHDDLL). A winged-helix domain (WHD) region spans residues 1417–1481 (VDMRNFIAFQ…GIWKLKPEYC (65 aa)). Positions 1434–1481 (STQEILQEFESKLSVAQSCVFRELLRNLCNFHRTPGGEGIWKLKPEYC) are essential for its interaction with RNA polymerase II, transcription-coupled nucleotide excision repair activity, association with chromatin after UV irradiation and for mediating the UV-induced translocation of ERRC8 to the nuclear matrix.

Belongs to the SNF2/RAD54 helicase family. Homodimer. Binds DNA. Interacts with ERCC8. Interacts with RNA polymerase II; interaction is enhanced by UV irradiation. Component of the B-WICH complex, at least composed of SMARCA5/SNF2H, BAZ1B/WSTF, SF3B1, DEK, MYO1C, ERCC6, MYBBP1A and DDX21. Interacts with KIAA1530/UVSSA. Interacts with ELOA and CUL5; the interaction is induced by DNA damaging agents or by inhibitors of RNA polymerase II elongation. Interacts (via WHD region) with RIF1. Interacts with SMARCC2/BAF170, SMARCB1/BAF47 and the neuron-specific chromatin remodeling complex (nBAF complex). Interacts with ERCC5/XPG (via C-terminus); the interaction stimulates ERCC6/CSB binding to DNA repair bubble and ERCC6/CSB ATPase activity. May form a complex composed of RNA polymerase II, ERCC6/CSB and ERCC5/XPG which associates with the DNA repair bubble during transcription-coupled nucleotide excision repair. Interacts with CAND1, CSTF1, DDX3X, DDX5, DDX17, DDX23, DHX36, HDAC1, HNRNPU, MTA2, PRPF3, PSMD3, RBBP4, SFPQ, SMARCA1, SMARCA2, TOP1, USP7 and XRCC5. In terms of processing, phosphorylated in a cell cycle-dependent manner at Ser-158 by cyclin A-CDK2 in response to DNA damage. Phosphorylation at this site promotes the intramolecular interaction of the N-terminal domain with the helicase ATP-binding domain, thereby probably releasing the inhibitory effect of the N-terminal domain on its ATPase activity. Phosphorylation is essential for its chromatin remodeling activity. Ubiquitinated at the C-terminus. Ubiquitination by the CSA complex leads to ERCC6 proteasomal degradation in a UV-dependent manner. Stabilized following interaction with KIAA1530/UVSSA, which promotes recruitment of deubiquitinating enzyme USP7, leading to deubiquitination of ERCC6 thereby preventing UV-induced degradation of ERCC6 by the proteasome.

It is found in the nucleus. It localises to the chromosome. The enzyme catalyses ATP + H2O = ADP + phosphate + H(+). Its function is as follows. Essential factor involved in transcription-coupled nucleotide excision repair (TC-NER), a process during which RNA polymerase II-blocking lesions are rapidly removed from the transcribed strand of active genes. Plays a central role in the initiation of the TC-NER process: specifically recognizes and binds RNA polymerase II stalled at a lesion, and mediates recruitment of ERCC8/CSA, initiating DNA damage excision by TFIIH recruitment. Upon DNA-binding, it locally modifies DNA conformation by wrapping the DNA around itself, thereby modifying the interface between stalled RNA polymerase II and DNA. Acts as a chromatin remodeler at DSBs; DNA-dependent ATPase-dependent activity is essential for this function. Plays an important role in regulating the choice of the DNA double-strand breaks (DSBs) repair pathway and G2/M checkpoint activation; DNA-dependent ATPase activity is essential for this function. Regulates the DNA repair pathway choice by inhibiting non-homologous end joining (NHEJ), thereby promoting the homologous recombination (HR)-mediated repair of DSBs during the S/G2 phases of the cell cycle. Mediates the activation of the ATM- and CHEK2-dependent DNA damage responses thus preventing premature entry of cells into mitosis following the induction of DNA DSBs. Remodels chromatin by evicting histones from chromatin flanking DSBs, limiting RIF1 accumulation at DSBs thereby promoting BRCA1-mediated HR. Required for stable recruitment of ELOA and CUL5 to DNA damage sites. Also involved in UV-induced translocation of ERCC8 to the nuclear matrix. Essential for neuronal differentiation and neuritogenesis; regulates transcription and chromatin remodeling activities required during neurogenesis. This chain is DNA excision repair protein ERCC-6 (Ercc6), found in Mus musculus (Mouse).